Here is a 60-residue protein sequence, read N- to C-terminus: MKSVCGVLIILVVLTTMLSISTFSTVGAEADCPISEAIKCVEKCKEKVEVCEPGVCKCSG.

A signal peptide spans 1–28 (MKSVCGVLIILVVLTTMLSISTFSTVGA). 3 disulfide bridges follow: Cys-32-Cys-51, Cys-40-Cys-56, and Cys-44-Cys-58.

Belongs to the short scorpion toxin superfamily. Potassium channel inhibitor family. Alpha-KTx 29 subfamily. Expressed by the venom gland.

The protein localises to the secreted. In terms of biological role, weakly inhibits the Kv1.3/KCNA3 channel (1 uM of thetoxin inhibits currents by 13.2%) and Kv7.1/KCNQ1 channel (10 uM of the toxin inhibits currents by 27.7%). The polypeptide is Potassium channel toxin alpha-KTx 29.2 (Lychas mucronatus (Chinese swimming scorpion)).